The following is a 406-amino-acid chain: 4-O-methyl-glucuronoyl methylesterase (406 aa).

The N-terminal stretch at 1-17 (MAFRWLSFLLLALPVLA) is a signal peptide. An intrachain disulfide couples cysteine 31 to cysteine 64. Asparagine 100, asparagine 110, asparagine 122, and asparagine 178 each carry an N-linked (GlcNAc...) asparagine glycan. The GXSYXG catalytic site motif motif lies at 215–220 (GCSRDG). 2 disulfide bridges follow: cysteine 216/cysteine 352 and cysteine 248/cysteine 324. Serine 217 serves as the catalytic Nucleophile. Substrate-binding residues include lysine 221, glutamine 263, and glutamate 271. A glycan (N-linked (GlcNAc...) asparagine) is linked at asparagine 285. Tryptophan 315 provides a ligand contact to substrate. Asparagine 348 carries N-linked (GlcNAc...) asparagine glycosylation. The active-site Proton donor/acceptor is histidine 351. 3 N-linked (GlcNAc...) asparagine glycosylation sites follow: asparagine 376, asparagine 387, and asparagine 398.

It belongs to the carbohydrate esterase 15 (CE15) family.

The protein resides in the secreted. The enzyme catalyses a 4-O-methyl-alpha-D-glucuronosyl ester derivative + H2O = 4-O-methyl-alpha-D-glucuronate derivative + an alcohol + H(+). Functionally, glucuronoyl esterase which may play a significant role in biomass degradation, as it is considered to disconnect hemicellulose from lignin through the hydrolysis of the ester bond between 4-O-methyl-D-glucuronic acid residues of glucuronoxylans and aromatic alcohols of lignin. The sequence is that of 4-O-methyl-glucuronoyl methylesterase from Phanerochaete carnosa (strain HHB-10118-sp) (White-rot fungus).